We begin with the raw amino-acid sequence, 218 residues long: Adenylate kinase (218 aa).

10-15 (GAGKGT) contacts ATP. Residues 30-59 (STGDMLRAAVKAGTPLGLEAKKVMDAGGLV) are NMP. AMP contacts are provided by residues T31, R36, 57–59 (GLV), 85–88 (GFPR), and Q92. The tract at residues 122 to 159 (GRRVHPASGRSYHVRFNPPKAEGVDDVTGEPLVQRDDD) is LID. ATP-binding positions include R123 and 132–133 (SY). AMP is bound by residues R156 and R167. Residue G203 participates in ATP binding.

The protein belongs to the adenylate kinase family. In terms of assembly, monomer.

The protein resides in the cytoplasm. It carries out the reaction AMP + ATP = 2 ADP. It functions in the pathway purine metabolism; AMP biosynthesis via salvage pathway; AMP from ADP: step 1/1. In terms of biological role, catalyzes the reversible transfer of the terminal phosphate group between ATP and AMP. Plays an important role in cellular energy homeostasis and in adenine nucleotide metabolism. The sequence is that of Adenylate kinase from Bordetella bronchiseptica (strain ATCC BAA-588 / NCTC 13252 / RB50) (Alcaligenes bronchisepticus).